A 205-amino-acid polypeptide reads, in one-letter code: Large ribosomal subunit protein uL4 (205 aa).

Belongs to the universal ribosomal protein uL4 family. As to quaternary structure, part of the 50S ribosomal subunit.

One of the primary rRNA binding proteins, this protein initially binds near the 5'-end of the 23S rRNA. It is important during the early stages of 50S assembly. It makes multiple contacts with different domains of the 23S rRNA in the assembled 50S subunit and ribosome. Functionally, forms part of the polypeptide exit tunnel. In Roseobacter denitrificans (strain ATCC 33942 / OCh 114) (Erythrobacter sp. (strain OCh 114)), this protein is Large ribosomal subunit protein uL4.